The chain runs to 63 residues: Cecropin-A2 (63 aa).

The signal sequence occupies residues 1 to 23; that stretch reads MNFYNIFVFVALILAITIGQSEA. Arg-62 carries the post-translational modification Arginine amide.

The protein belongs to the cecropin family. In terms of tissue distribution, strongly expressed in larval, pupal and adult fat body and hemocytes after injection of bacteria. Maximal expression in the adult involves fat body cells of the head, thorax and abdomen.

It localises to the secreted. Cecropins have lytic and antibacterial activity against several Gram-positive and Gram-negative bacteria. This is Cecropin-A2 from Drosophila melanogaster (Fruit fly).